The sequence spans 305 residues: tRNA uridine(34) hydroxylase (305 aa).

The Rhodanese domain occupies 124–219 (QDEETLVVDT…YLETIPKEES (96 aa)). Catalysis depends on cysteine 179, which acts as the Cysteine persulfide intermediate.

Belongs to the TrhO family.

The catalysed reaction is uridine(34) in tRNA + AH2 + O2 = 5-hydroxyuridine(34) in tRNA + A + H2O. Functionally, catalyzes oxygen-dependent 5-hydroxyuridine (ho5U) modification at position 34 in tRNAs. In Bartonella bacilliformis (strain ATCC 35685 / KC583 / Herrer 020/F12,63), this protein is tRNA uridine(34) hydroxylase.